Here is a 404-residue protein sequence, read N- to C-terminus: Cysteine desulfurase IscS (404 aa).

Pyridoxal 5'-phosphate-binding positions include 75–76 (AT), asparagine 155, glutamine 183, and 203–205 (SAH). Lysine 206 is subject to N6-(pyridoxal phosphate)lysine. Threonine 243 is a pyridoxal 5'-phosphate binding site. Cysteine 328 acts as the Cysteine persulfide intermediate in catalysis. Cysteine 328 provides a ligand contact to [2Fe-2S] cluster.

The protein belongs to the class-V pyridoxal-phosphate-dependent aminotransferase family. NifS/IscS subfamily. In terms of assembly, homodimer. Forms a heterotetramer with IscU, interacts with other sulfur acceptors. Pyridoxal 5'-phosphate serves as cofactor.

The protein resides in the cytoplasm. It carries out the reaction (sulfur carrier)-H + L-cysteine = (sulfur carrier)-SH + L-alanine. The protein operates within cofactor biosynthesis; iron-sulfur cluster biosynthesis. In terms of biological role, master enzyme that delivers sulfur to a number of partners involved in Fe-S cluster assembly, tRNA modification or cofactor biosynthesis. Catalyzes the removal of elemental sulfur atoms from cysteine to produce alanine. Functions as a sulfur delivery protein for Fe-S cluster synthesis onto IscU, an Fe-S scaffold assembly protein, as well as other S acceptor proteins. The sequence is that of Cysteine desulfurase IscS from Vibrio vulnificus (strain CMCP6).